A 402-amino-acid polypeptide reads, in one-letter code: Diaminopimelate decarboxylase (402 aa).

N6-(pyridoxal phosphate)lysine is present on Lys45. Pyridoxal 5'-phosphate-binding positions include Gly224 and 259-262 (EPGR). Positions 262, 298, and 302 each coordinate substrate. The Proton donor role is filled by Cys327. Substrate-binding residues include Glu328 and Tyr356. Residue Tyr356 coordinates pyridoxal 5'-phosphate.

The protein belongs to the Orn/Lys/Arg decarboxylase class-II family. LysA subfamily. In terms of assembly, homodimer. Requires pyridoxal 5'-phosphate as cofactor.

It carries out the reaction meso-2,6-diaminopimelate + H(+) = L-lysine + CO2. It participates in amino-acid biosynthesis; L-lysine biosynthesis via DAP pathway; L-lysine from DL-2,6-diaminopimelate: step 1/1. Its function is as follows. Specifically catalyzes the decarboxylation of meso-diaminopimelate (meso-DAP) to L-lysine. In Campylobacter jejuni subsp. jejuni serotype O:2 (strain ATCC 700819 / NCTC 11168), this protein is Diaminopimelate decarboxylase.